Reading from the N-terminus, the 323-residue chain is Elongation factor P--(R)-beta-lysine ligase (323 aa).

74–76 (SPE) serves as a coordination point for substrate. ATP contacts are provided by residues 98 to 100 (RNE) and Asn107. Tyr116 provides a ligand contact to substrate. 242 to 243 (EL) contacts ATP. Substrate is bound at residue Glu249. An ATP-binding site is contributed by Gly298.

This sequence belongs to the class-II aminoacyl-tRNA synthetase family. EpmA subfamily. In terms of assembly, homodimer.

It catalyses the reaction D-beta-lysine + L-lysyl-[protein] + ATP = N(6)-((3R)-3,6-diaminohexanoyl)-L-lysyl-[protein] + AMP + diphosphate + H(+). In terms of biological role, with EpmB is involved in the beta-lysylation step of the post-translational modification of translation elongation factor P (EF-P). Catalyzes the ATP-dependent activation of (R)-beta-lysine produced by EpmB, forming a lysyl-adenylate, from which the beta-lysyl moiety is then transferred to the epsilon-amino group of a conserved specific lysine residue in EF-P. The sequence is that of Elongation factor P--(R)-beta-lysine ligase from Vibrio campbellii (strain ATCC BAA-1116).